The primary structure comprises 481 residues: Glutamate--cysteine ligase (481 aa).

It belongs to the glutamate--cysteine ligase type 1 family. Type 1 subfamily.

It carries out the reaction L-cysteine + L-glutamate + ATP = gamma-L-glutamyl-L-cysteine + ADP + phosphate + H(+). It functions in the pathway sulfur metabolism; glutathione biosynthesis; glutathione from L-cysteine and L-glutamate: step 1/2. The protein is Glutamate--cysteine ligase of Clostridium acetobutylicum (strain ATCC 824 / DSM 792 / JCM 1419 / IAM 19013 / LMG 5710 / NBRC 13948 / NRRL B-527 / VKM B-1787 / 2291 / W).